The following is a 279-amino-acid chain: Dermonecrotic toxin LspiSicTox-betaIE3i (279 aa).

Histidine 5 is an active-site residue. Glutamate 25 and aspartate 27 together coordinate Mg(2+). Histidine 41 serves as the catalytic Nucleophile. Intrachain disulfides connect cysteine 45-cysteine 51 and cysteine 47-cysteine 190. Aspartate 85 provides a ligand contact to Mg(2+).

It belongs to the arthropod phospholipase D family. Class II subfamily. Mg(2+) is required as a cofactor. As to expression, expressed by the venom gland.

The protein resides in the secreted. It carries out the reaction an N-(acyl)-sphingosylphosphocholine = an N-(acyl)-sphingosyl-1,3-cyclic phosphate + choline. The enzyme catalyses an N-(acyl)-sphingosylphosphoethanolamine = an N-(acyl)-sphingosyl-1,3-cyclic phosphate + ethanolamine. The catalysed reaction is a 1-acyl-sn-glycero-3-phosphocholine = a 1-acyl-sn-glycero-2,3-cyclic phosphate + choline. It catalyses the reaction a 1-acyl-sn-glycero-3-phosphoethanolamine = a 1-acyl-sn-glycero-2,3-cyclic phosphate + ethanolamine. Functionally, dermonecrotic toxins cleave the phosphodiester linkage between the phosphate and headgroup of certain phospholipids (sphingolipid and lysolipid substrates), forming an alcohol (often choline) and a cyclic phosphate. This toxin acts on sphingomyelin (SM). It may also act on ceramide phosphoethanolamine (CPE), lysophosphatidylcholine (LPC) and lysophosphatidylethanolamine (LPE), but not on lysophosphatidylserine (LPS), and lysophosphatidylglycerol (LPG). It acts by transphosphatidylation, releasing exclusively cyclic phosphate products as second products. Induces dermonecrosis, hemolysis, increased vascular permeability, edema, inflammatory response, and platelet aggregation. The sequence is that of Dermonecrotic toxin LspiSicTox-betaIE3i from Loxosceles spinulosa (Recluse spider).